Consider the following 83-residue polypeptide: Carboxysome shell vertex protein CsoS4A (83 aa).

Residues 1–78 (MKIMQVEKTL…SDLTIIGIID (78 aa)) enclose the BMV domain.

Belongs to the CcmL/EutN family. CsoS4 subfamily. In terms of assembly, homopentamer.

It is found in the carboxysome. Probably forms vertices in the carboxysome, a polyhedral inclusion where RuBisCO (ribulose bisphosphate carboxylase, cbbL-cbbS) is sequestered. Has been modeled to induce curvature upon insertion into an otherwise flat hexagonal layer of major carboxysome subunits. A minor shell protein, only 12 pentamers of CsoS4A/CsoS4B are calculated to be present in each carboxysome. The 2 CsoS4 proteins contribute to the impermeability of the carboxysome to CO(2). Its function is as follows. Unlike beta-carboxysomes, alpha-carboxysomes (Cb) can form without cargo protein. CsoS2 is essential for Cb formation and is also capable of targeting foreign proteins to the Cb. The Cb shell assembles with the aid of CsoS2; CsoS1A, CsoS1B and CsoS1C form the majority of the shell while CsoS4A and CsoS4B form vertices. CsoS1D forms pseudohexamers that probably control metabolite flux into and out of the shell. This is Carboxysome shell vertex protein CsoS4A from Halothiobacillus neapolitanus (strain ATCC 23641 / c2) (Thiobacillus neapolitanus).